A 147-amino-acid chain; its full sequence is MAAQRLGKRVLSKLQSPSRARGPGGSPGGLQKRHARVTVKYDRRELQRRLDVEKWIDGRLEELYRGMEADMPDEINIDELLELESEEERSRKIQGLLKSCGKPVEDFIQELLAKLQGLHRQPGLRQPSPSHDGSLSPLQDRARTAHP.

The span at 1–11 shows a compositional bias: basic residues; that stretch reads MAAQRLGKRVL. A disordered region spans residues 1–37; it reads MAAQRLGKRVLSKLQSPSRARGPGGSPGGLQKRHARV. At Ser26 the chain carries Phosphoserine. The tract at residues 35–120 is inhibitory; it reads ARVTVKYDRR…LLAKLQGLHR (86 aa). Thr38 is modified (phosphothreonine; by PKC). Residues 118 to 147 form a disordered region; that stretch reads LHRQPGLRQPSPSHDGSLSPLQDRARTAHP. The segment covering 127–137 has biased composition (polar residues); sequence PSPSHDGSLSP. Phosphoserine occurs at positions 128, 134, and 136.

Belongs to the PP1 inhibitor family. In terms of tissue distribution, isoform 1 is detected in aorta and testis. Isoform 2 is detected in aorta.

Its subcellular location is the cytoplasm. Inhibitor of PPP1CA. Has over 1000-fold higher inhibitory activity when phosphorylated, creating a molecular switch for regulating the phosphorylation status of PPP1CA substrates and smooth muscle contraction. The polypeptide is Protein phosphatase 1 regulatory subunit 14A (PPP1R14A) (Homo sapiens (Human)).